Here is a 98-residue protein sequence, read N- to C-terminus: NADH-ubiquinone oxidoreductase chain 4L (98 aa).

3 consecutive transmembrane segments (helical) span residues 1 to 21 (MSMV…GLLM), 29 to 49 (SLLC…LTIL), and 61 to 81 (IILL…LVMV).

This sequence belongs to the complex I subunit 4L family. As to quaternary structure, core subunit of respiratory chain NADH dehydrogenase (Complex I) which is composed of 45 different subunits.

The protein resides in the mitochondrion inner membrane. It catalyses the reaction a ubiquinone + NADH + 5 H(+)(in) = a ubiquinol + NAD(+) + 4 H(+)(out). Core subunit of the mitochondrial membrane respiratory chain NADH dehydrogenase (Complex I) which catalyzes electron transfer from NADH through the respiratory chain, using ubiquinone as an electron acceptor. Part of the enzyme membrane arm which is embedded in the lipid bilayer and involved in proton translocation. The protein is NADH-ubiquinone oxidoreductase chain 4L (MT-ND4L) of Bos mutus grunniens (Wild yak).